The sequence spans 162 residues: Cyclic pyranopterin monophosphate synthase (162 aa).

Substrate contacts are provided by residues Leu75 to His77 and Met113 to Glu114. Residue Asp128 is part of the active site.

Belongs to the MoaC family. Homohexamer; trimer of dimers.

It catalyses the reaction (8S)-3',8-cyclo-7,8-dihydroguanosine 5'-triphosphate = cyclic pyranopterin phosphate + diphosphate. Its pathway is cofactor biosynthesis; molybdopterin biosynthesis. In terms of biological role, catalyzes the conversion of (8S)-3',8-cyclo-7,8-dihydroguanosine 5'-triphosphate to cyclic pyranopterin monophosphate (cPMP). This is Cyclic pyranopterin monophosphate synthase from Burkholderia cenocepacia (strain HI2424).